The sequence spans 294 residues: MSTHTEEQHGEHQYLSQVQHILNYGSFKNDRTGTGTLSIFGTQSRFSLENEFPLLTTKRVFWRGVVEELLWFIRGSTDSKELSAAGVHIWDANGSRSFLDKLGFYDRDEGDLGPVYGFQWRHFGAEYKGVGRDYKGEGVDQLKQLIDTIKTNPTDRRMLMCAWNVSDIPKMVLPPCHVLSQFYVCDGKLSCQLYQRSADMGLGVPFNIASYSLLTCMIAHVTNLVPGEFIHTIGDAHIYVDHIDALKMQLTRTPRPFPTLRFARNVSCIDDFKADDIILENYNPHPIIKMHMAV.

Residues arginine 31 and arginine 156 to arginine 157 contribute to the dUMP site. Cysteine 176 (nucleophile) is an active-site residue. DUMP contacts are provided by residues arginine 196–aspartate 199, asparagine 207, and histidine 237–tyrosine 239. Residue aspartate 199 coordinates (6R)-5,10-methylene-5,6,7,8-tetrahydrofolate. Alanine 293 is a (6R)-5,10-methylene-5,6,7,8-tetrahydrofolate binding site.

This sequence belongs to the thymidylate synthase family. In terms of assembly, homodimer.

The enzyme catalyses dUMP + (6R)-5,10-methylene-5,6,7,8-tetrahydrofolate = 7,8-dihydrofolate + dTMP. Its pathway is pyrimidine metabolism; dTTP biosynthesis. The polypeptide is Thymidylate synthase (70) (Saimiri sciureus (Common squirrel monkey)).